The sequence spans 349 residues: MAFKIASSPHVTRNLQTSTVMQRVILCLLPGLVVQCAFFGWGTLIQVLLAIIVALSCEAAVMKLRKRSIKASLGDNSAMLTAILIGVAIPPLAPWWMIVMGTAFAIVIVKHLYGGLGHNLFNPAMAAYVLLLVSFPLQMTTWIAPSTVALNTPSIVDSLQLIFNVGAHVGMEQFRLGIDGISMATPLDTLKTDLSLGLTTTESMAKSIFDGSTGVGWFWVNLAYLAGGIVLLKLKAIRWHISTGVLAGLFVASSVGFLLSPDTHASPLFHLFSGATMLAAFFIATDPVTAATSPRGRIIFGALIGVLVYIIRTQGGYPDAFAFAVLLANLCAPFIDYYVRPRTYGHSAG.

3 helical membrane passes run 36-56 (CAFF…VALS), 77-99 (SAML…WMIV), and 124-144 (AMAA…TWIA). T185 is modified (FMN phosphoryl threonine). The next 5 membrane-spanning stretches (helical) occupy residues 212–232 (STGV…IVLL), 239–259 (WHIS…GFLL), 265–285 (ASPL…FIAT), 291–311 (ATSP…VYII), and 315–335 (GGYP…APFI).

It belongs to the NqrB/RnfD family. The complex is composed of six subunits: RnfA, RnfB, RnfC, RnfD, RnfE and RnfG. FMN is required as a cofactor.

The protein localises to the cell inner membrane. In terms of biological role, part of a membrane-bound complex that couples electron transfer with translocation of ions across the membrane. This is Ion-translocating oxidoreductase complex subunit D from Shewanella oneidensis (strain ATCC 700550 / JCM 31522 / CIP 106686 / LMG 19005 / NCIMB 14063 / MR-1).